Reading from the N-terminus, the 179-residue chain is Peptidyl-tRNA hydrolase (179 aa).

Y14 serves as a coordination point for tRNA. The active-site Proton acceptor is H19. Y61, N63, and N107 together coordinate tRNA.

The protein belongs to the PTH family. In terms of assembly, monomer.

It is found in the cytoplasm. The enzyme catalyses an N-acyl-L-alpha-aminoacyl-tRNA + H2O = an N-acyl-L-amino acid + a tRNA + H(+). In terms of biological role, hydrolyzes ribosome-free peptidyl-tRNAs (with 1 or more amino acids incorporated), which drop off the ribosome during protein synthesis, or as a result of ribosome stalling. Functionally, catalyzes the release of premature peptidyl moieties from peptidyl-tRNA molecules trapped in stalled 50S ribosomal subunits, and thus maintains levels of free tRNAs and 50S ribosomes. The polypeptide is Peptidyl-tRNA hydrolase (Campylobacter lari (strain RM2100 / D67 / ATCC BAA-1060)).